The primary structure comprises 561 residues: DNA ligase B (561 aa).

Residue Lys125 is the N6-AMP-lysine intermediate of the active site.

It belongs to the NAD-dependent DNA ligase family. LigB subfamily.

The catalysed reaction is NAD(+) + (deoxyribonucleotide)n-3'-hydroxyl + 5'-phospho-(deoxyribonucleotide)m = (deoxyribonucleotide)n+m + AMP + beta-nicotinamide D-nucleotide.. In terms of biological role, catalyzes the formation of phosphodiester linkages between 5'-phosphoryl and 3'-hydroxyl groups in double-stranded DNA using NAD as a coenzyme and as the energy source for the reaction. This is DNA ligase B from Salmonella arizonae (strain ATCC BAA-731 / CDC346-86 / RSK2980).